The chain runs to 141 residues: Cystatin (141 aa).

Positions 1–26 (MVHSQLPVAASLRLLCALLLLPSATM) are cleaved as a signal peptide. The 101-residue stretch at 29–129 (GGLSPRSVTD…CRFQVWSRPW (101 aa)) folds into the Cystatin domain. Residues 73 to 77 (QVVAG) carry the Secondary area of contact motif. 2 disulfides stabilise this stretch: Cys91-Cys107 and Cys120-Cys140.

The protein belongs to the cystatin family. In terms of tissue distribution, expressed by the venom gland at an extremely low level (at protein level).

It localises to the secreted. Its function is as follows. Inhibits various C1 cysteine proteases including cathepsin L, papain and cathepsin B. This protein has no toxic activity and its function in the venom is unknown. It may play a role as a housekeeping or regulatory protein. The protein is Cystatin of Cryptophis nigrescens (Eastern small-eyed snake).